Here is a 921-residue protein sequence, read N- to C-terminus: Isoleucine--tRNA ligase (921 aa).

The 'HIGH' region signature appears at 57 to 67 (PYANGNIHVGT). Glutamate 551 is an L-isoleucyl-5'-AMP binding site. A 'KMSKS' region motif is present at residues 592-596 (KMSKS). Residue lysine 595 participates in ATP binding. Zn(2+) is bound by residues cysteine 885, cysteine 888, cysteine 905, and cysteine 908.

The protein belongs to the class-I aminoacyl-tRNA synthetase family. IleS type 1 subfamily. As to quaternary structure, monomer. Zn(2+) serves as cofactor.

It is found in the cytoplasm. It catalyses the reaction tRNA(Ile) + L-isoleucine + ATP = L-isoleucyl-tRNA(Ile) + AMP + diphosphate. Catalyzes the attachment of isoleucine to tRNA(Ile). As IleRS can inadvertently accommodate and process structurally similar amino acids such as valine, to avoid such errors it has two additional distinct tRNA(Ile)-dependent editing activities. One activity is designated as 'pretransfer' editing and involves the hydrolysis of activated Val-AMP. The other activity is designated 'posttransfer' editing and involves deacylation of mischarged Val-tRNA(Ile). This chain is Isoleucine--tRNA ligase, found in Kosmotoga olearia (strain ATCC BAA-1733 / DSM 21960 / TBF 19.5.1).